The chain runs to 2863 residues: MASEDNRVPSPPPTGDDGGGGGREETPTEGGALSLKPGLPIRGIRMKFAVLTGLVEVGEVSNRDIVETVFNLLVGGQFDLEMNFIIQEGESINCMVDLLEKCDITCQAEVWSMFTAILKKSIRNLQVCTEVGLVEKVLGKIEKVDNMIADLLVDMLGVLASYNLTVRELKLFFSKLQGDKGRWPPHAGKLLSVLKHMPQKYGPDAFFNFPGKSAAAIALPPIAKWPYQNGFTFHTWLRMDPVNNINVDKDKPYLYCFRTSKGLGYSAHFVGGCLIVTSIKSKGKGFQHCVKFDFKPQKWYMVTIVHIYNRWKNSELRCYVNGELASYGEITWFVNTSDTFDKCFLGSSETADANRVFCGQMTAVYLFSEALNAAQIFAIYQLGLGYKGTFKFKAESDLFLAEHHKLLLYDGKLSSAIAFTYNPRATDAQLCLESSPKDNPSIFVHSPHALMLQDVKAVLTHSIQSAMHSIGGVQVLFPLFAQLDYRQYLSDEIDLTICSTLLAFIMELLKNSIAMQEQMLACKGFLVIGYSLEKSSKSHVSRAVLELCLAFSKYLSNLQNGMPLLKQLCDHVLLNPAIWIHTPAKVQLMLYTYLSTEFIGTVNIYNTIRRVGTVLLIMHTLKYYYWAVNPQDRSGITPKGLDGPRPNQKEMLSLRAFLLMFIKQLVMKDSGVKEDELQAILNYLLTMHEDDNLMDVLQLLVALMSEHPNSMIPAFDQRNGLRVIYKLLASKSEGIRVQALKAMGYFLKHLAPKRKAEVMLGHGLFSLLAERLMLQTNLITMTTYNVLFEILIEQIGTQVIHKQHPDPDSSVKIQNPQILKVIATLLRNSPQCPESMEVRRAFLSDMIKLFNNSRENRRSLLQCSVWQEWMLSLCYFNPKNSDEQKITEMVYAIFRILLYHAVKYEWGGWRVWVDTLSITHSKVTFEIHKENLANIFREQQGKVDEEIGLCSSTSVQAASGIRRDINVSVGSQQPDTKDSPVCPHFTTNGNENSSIEKTSSLESASNIELQTTNTSYEEMKAEQENQELPDEGTLEETLTNETRNADDLEVSSDIIEAVAISSNSFITTGKDSMTVSEVTASISSPSEEDASEMPEFLDKSIVEEEEDDDYVELKVEGSPTEEANLPTELQDNSLSPAASEAGEKLDMFGNDDKLIFQEGKPVTEKQTDTETQDSKDSGIQTMTASGSSAMSPETTVSQIAVESDLGQMLEEGKKATNLTRETKLINDCHGSVSEASSEQKIAKLDVSNVATDTERLELKASPNVEAPQPHRHVLEISRQHEQPGQGIAPDAVNGQRRDSRSTVFRIPEFNWSQMHQRLLTDLLFSIETDIQMWRSHSTKTVMDFVNSSDNVIFVHNTIHLISQVMDNMVMACGGILPLLSAATSATHELENIEPTQGLSIEASVTFLQRLISLVDVLIFASSLGFTEIEAEKSMSSGGILRQCLRLVCAVAVRNCLECQQHSQLKTRGDKALKPMHSLIPLGKSAAKSPVDIVTGGISPVRDLDRLLQDMDINRLRAVVFRDIEDSKQAQFLALAVVYFISVLMVSKYRDILEPQNERHSQSCTETGSENENVSLSEITPAAFSTLTTASVEESESTSSARRRDSGIGEETATGLGSHVEVTPHTAPPGVSAGPDAISEVLSTLSLEVNKSPETKNDRGNDLDTKATPSVSVSKNVNVKDILRSLVNIPADGVTVDPALLPPACLGALGDLSVEQPVQFRSFDRSVIVAAKKSAVSPSTFNTSIPTNAVSVVSSVDSAQASDMGGESPGSRSSNAKLPSVPTVDSVSQDPVSNMSITERLEHALEKAAPLLREIFVDFAPFLSRTLLGSHGQELLIEGTSLVCMKSSSSVVELVMLLCSQEWQNSIQKNAGLAFIELVNEGRLLSQTMKDHLVRVANEAEFILSRQRAEDIHRHAEFESLCAQYSADKREDEKMCDHLIRAAKYRDHVTATQLIQKIINILTDKHGAWGNSAVSRPLEFWRLDYWEDDLRRRRRFVRNPLGSTHPEATLKTAVEHVCIFKLRENSKATDEDILAKGKQSIRSQALGNQNSENEILLEGDDDTLSSVDEKDLENLAGPVSLSTPAQLVAPSVVVKGTLSVTSSELYFEVDEEDPNFKKIDPKILAYTEGLHGKWLFTEIRSIFSRRYLLQNTALEIFMANRVAVMFNFPDPATVKKVVNYLPRVGVGTSFGLPQTRRISLASPRQLFKASNMTQRWQHREISNFEYLMFLNTIAGRSYNDLNQYPVFPWVITNYESEELDLTLPTNFRDLSKPIGALNPKRAAFFAERYESWEDDQVPKFHYGTHYSTASFVLAWLLRIEPFTTYFLNLQGGKFDHADRTFSSISRAWRNSQRDTSDIKELIPEFYYLPEMFVNFNNYNLGVMDDGTVVSDVELPPWAKTSEEFVHINRLALESEFVSCQLHQWIDLIFGYKQQGPEAVRALNVFYYLTYEGAVNLNSITDPVLREAVEAQIRSFGQTPSQLLIEPHPPRGSAMQVSPLMFTDKAQQDVIMVLKFPSNSPVTHVAANTQPGLATPAVITVTANRLFAVNKWHNLPAHQGAVQDQPYQLPVEIDPLIASNTGMHRRQITDLLDQSIQVHSQCFVITSDNRYILVCGFWDKSFRVYSTDTGRLIQVVFGHWDVVTCLARSESYIGGNCYILSGSRDATLLLWYWNGKCSGIGDNPGSETAAPRAILTGHDYEVTCAAVCAELGLVLSGSQEGPCLIHSMNGDLLRTLEGPENCLKPKLIQASREGHCVIFYENGLFCTFSVNGKLQATMETDDNIRAIQLSRDGQYLLTGGDRGVVVVRQVSDLKQLFAYPGCDAGIRAMALSYDQRCIISGMASGSIVLFYNDFNRWHHEYQTRY.

Disordered regions lie at residues 1–35 (MASEDNRVPSPPPTGDDGGGGGREETPTEGGALSL), 969–1005 (VGSQQPDTKDSPVCPHFTTNGNENSSIEKTSSLESAS), and 1018–1039 (EMKAEQENQELPDEGTLEETLT). Ala-2 is modified (N-acetylalanine). Ser-10, Ser-979, and Ser-1003 each carry phosphoserine. Polar residues predominate over residues 985–1005 (FTTNGNENSSIEKTSSLESAS). Residues 1006–1053 (NIELQTTNTSYEEMKAEQENQELPDEGTLEETLTNETRNADDLEVSSD) are a coiled coil. Residues 1024 to 1034 (ENQELPDEGTL) show a composition bias toward acidic residues. 3 positions are modified to phosphoserine: Ser-1100, Ser-1135, and Ser-1139. A compositionally biased stretch (basic and acidic residues) spans 1161-1176 (PVTEKQTDTETQDSKD). The disordered stretch occupies residues 1161-1193 (PVTEKQTDTETQDSKDSGIQTMTASGSSAMSPE). Polar residues predominate over residues 1177 to 1193 (SGIQTMTASGSSAMSPE). A phosphoserine mark is found at Ser-1233, Ser-1247, and Ser-1261. The stretch at 1301–1343 (STVFRIPEFNWSQMHQRLLTDLLFSIETDIQMWRSHSTKTVMD) is one WD 1 repeat. Ser-1488 and Ser-1498 each carry phosphoserine. The helical transmembrane segment at 1531 to 1548 (FLALAVVYFISVLMVSKY) threads the bilayer. Over residues 1586-1599 (LTTASVEESESTSS) the composition is skewed to low complexity. Disordered stretches follow at residues 1586–1668 (LTTA…KATP) and 1759–1789 (QASDMGGESPGSRSSNAKLPSVPTVDSVSQD). At Ser-1605 the chain carries Phosphoserine. Over residues 1650–1664 (KSPETKNDRGNDLDT) the composition is skewed to basic and acidic residues. Residues Ser-1767, Ser-1770, and Ser-2064 each carry the phosphoserine modification. Polar residues predominate over residues 1769–1789 (GSRSSNAKLPSVPTVDSVSQD). In terms of domain architecture, BEACH-type PH spans 2073 to 2181 (NLAGPVSLST…TVKKVVNYLP (109 aa)). Residues 2200-2489 (ASPRQLFKAS…QLLIEPHPPR (290 aa)) form the BEACH domain. The residue at position 2496 (Ser-2496) is a Phosphoserine. 5 WD repeats span residues 2591–2633 (DQSI…LIQV), 2636–2679 (GHWD…SGIG), 2695–2735 (GHDY…RTLE), 2777–2816 (ETDDNIRAIQLSRDGQYLLTGGDRGVVVVRQVSDLKQLFA), and 2819–2858 (GCDAGIRAMALSYDQRCIISGMASGSIVLFYNDFNRWHHE).

In terms of assembly, interacts with TOM1 and TOLLIP. Ubiquitous.

It localises to the cell membrane. It is found in the endoplasmic reticulum membrane. Its subcellular location is the golgi apparatus. The protein resides in the trans-Golgi network membrane. The protein localises to the lysosome membrane. In terms of biological role, involved in coupling signal transduction and vesicle trafficking to enable polarized secretion and/or membrane deposition of immune effector molecules. Involved in phagophore growth during mitophagy by regulating ATG9A trafficking to mitochondria. The polypeptide is Lipopolysaccharide-responsive and beige-like anchor protein (Homo sapiens (Human)).